A 786-amino-acid chain; its full sequence is Myosin light chain kinase 3 (786 aa).

S155 bears the Phosphoserine mark. 3 disordered regions span residues 233 to 258 (EALD…SEDT), 279 to 315 (RMSQ…IHSD), and 333 to 443 (ELFE…GRRV). Positions 279-293 (RMSQSAGEGTSSSKP) are enriched in polar residues. Phosphoserine is present on residues S341 and S422. Residues 482-737 (VSQHEVLGGG…ATQCLKHEWL (256 aa)) enclose the Protein kinase domain. Residues 488 to 496 (LGGGRFGQV) and K511 each bind ATP. D603 (proton acceptor) is an active-site residue.

The protein belongs to the protein kinase superfamily. CAMK Ser/Thr protein kinase family. Mg(2+) is required as a cofactor. Phosphorylated on serine residues. In terms of tissue distribution, expressed in cardiomyocytes (at protein level). Up-regulated in heart after experimental myocardial infarction at the mRNA level.

The protein resides in the cytoplasm. The catalysed reaction is L-seryl-[myosin light chain] + ATP = O-phospho-L-seryl-[myosin light chain] + ADP + H(+). The enzyme catalyses L-threonyl-[myosin light chain] + ATP = O-phospho-L-threonyl-[myosin light chain] + ADP + H(+). Calmodulin-dependent kinase that phosphorylates MYL2 in vitro. Promotes sarcomere formation in cardiomyocytes. Increases cardiomyocyte contractility. This chain is Myosin light chain kinase 3 (Mylk3), found in Rattus norvegicus (Rat).